The primary structure comprises 246 residues: 3-deoxy-manno-octulosonate cytidylyltransferase (246 aa).

Belongs to the KdsB family.

Its subcellular location is the cytoplasm. The catalysed reaction is 3-deoxy-alpha-D-manno-oct-2-ulosonate + CTP = CMP-3-deoxy-beta-D-manno-octulosonate + diphosphate. The protein operates within nucleotide-sugar biosynthesis; CMP-3-deoxy-D-manno-octulosonate biosynthesis; CMP-3-deoxy-D-manno-octulosonate from 3-deoxy-D-manno-octulosonate and CTP: step 1/1. It participates in bacterial outer membrane biogenesis; lipopolysaccharide biosynthesis. In terms of biological role, activates KDO (a required 8-carbon sugar) for incorporation into bacterial lipopolysaccharide in Gram-negative bacteria. In Chloroherpeton thalassium (strain ATCC 35110 / GB-78), this protein is 3-deoxy-manno-octulosonate cytidylyltransferase.